A 276-amino-acid polypeptide reads, in one-letter code: Radial spoke head protein 9 homolog (276 aa).

It belongs to the flagellar radial spoke RSP9 family. Component of the axonemal radial spoke 1 (RS1) and 2 (RS2) complexes, at least composed of spoke head proteins RSPH1, RSPH3, RSPH9 and the cilia-specific component RSPH4A or sperm-specific component RSPH6A, spoke stalk proteins RSPH14, DNAJB13, DYDC1, ROPN1L and NME5, and the RS1 complex-specific anchor protein IQUB. Interacts with IQUB. Interacts with RSPH3B. Interacts with RSPH4A. Interacts with RSPH6A. Interacts with CFAP61. Interacts with LRRC23. In terms of tissue distribution, expressed in the testis, trachea, lung, oviduct and ependymal cells (at protein level).

Its subcellular location is the cytoplasm. It localises to the cytoskeleton. The protein localises to the cilium axoneme. The protein resides in the flagellum axoneme. It is found in the cell projection. Its subcellular location is the kinocilium. Its function is as follows. Functions as part of axonemal radial spoke complexes that play an important part in the motility of sperm and cilia. Essential for both the radial spoke head assembly and the central pair microtubule stability in ependymal motile cilia. Required for motility of olfactory and neural cilia and for the structural integrity of ciliary axonemes in both 9+0 and 9+2 motile cilia. The polypeptide is Radial spoke head protein 9 homolog (Rsph9) (Mus musculus (Mouse)).